Here is a 185-residue protein sequence, read N- to C-terminus: Ribosome-recycling factor (185 aa).

This sequence belongs to the RRF family.

The protein localises to the cytoplasm. In terms of biological role, responsible for the release of ribosomes from messenger RNA at the termination of protein biosynthesis. May increase the efficiency of translation by recycling ribosomes from one round of translation to another. The chain is Ribosome-recycling factor from Lactococcus lactis subsp. cremoris (strain SK11).